Reading from the N-terminus, the 264-residue chain is MKIEAVIFDWAGTTVDYGCFAPLEVFMEIFHKRGVVITAEEARKPMGLLKIDHVRALTEMPRIASEWNRVFGQLPTETDIQEMYEEFEEILFTILPRYASPIHGVKEVIASLRERGIKIGSTTGYTREMMDIVAKEAALQGYKPDFLVTPDDVPAGRPYPWMCYKNAMELGVYPMNHMIKIGDTVSDMKEGRNAGMWTVGVILGSSELGLSEEEVENMDPVELREKIEVVRNRFVENGAHFTIETMQELETVMEHIEKQQLIIS.

The active-site Nucleophile is D9. D9 and A11 together coordinate Mg(2+). The Schiff-base intermediate with substrate role is filled by K50. D183 serves as a coordination point for Mg(2+).

This sequence belongs to the HAD-like hydrolase superfamily. PhnX family. As to quaternary structure, homodimer. Requires Mg(2+) as cofactor.

It catalyses the reaction phosphonoacetaldehyde + H2O = acetaldehyde + phosphate + H(+). In terms of biological role, involved in phosphonate degradation. This is Phosphonoacetaldehyde hydrolase from Bacillus cereus (strain ATCC 10987 / NRS 248).